We begin with the raw amino-acid sequence, 428 residues long: Histidinol dehydrogenase (428 aa).

NAD(+)-binding residues include Tyr-127, Gln-185, and Asn-208. Positions 234, 256, and 259 each coordinate substrate. Residues Gln-256 and His-259 each contribute to the Zn(2+) site. Residues Glu-323 and His-324 each act as proton acceptor in the active site. Substrate is bound by residues His-324, Asp-357, Glu-411, and His-416. Asp-357 serves as a coordination point for Zn(2+). His-416 contacts Zn(2+).

It belongs to the histidinol dehydrogenase family. Zn(2+) is required as a cofactor.

The enzyme catalyses L-histidinol + 2 NAD(+) + H2O = L-histidine + 2 NADH + 3 H(+). It participates in amino-acid biosynthesis; L-histidine biosynthesis; L-histidine from 5-phospho-alpha-D-ribose 1-diphosphate: step 9/9. Its function is as follows. Catalyzes the sequential NAD-dependent oxidations of L-histidinol to L-histidinaldehyde and then to L-histidine. The sequence is that of Histidinol dehydrogenase from Mannheimia succiniciproducens (strain KCTC 0769BP / MBEL55E).